Reading from the N-terminus, the 108-residue chain is Thioredoxin (108 aa).

The 107-residue stretch at 2–108 folds into the Thioredoxin domain; the sequence is GKYFEATDKN…IAKKIDEHIG (107 aa). Cys-32 and Cys-35 are oxidised to a cystine.

The protein belongs to the thioredoxin family.

Participates in various redox reactions through the reversible oxidation of its active center dithiol to a disulfide and catalyzes dithiol-disulfide exchange reactions. The sequence is that of Thioredoxin (trxA) from Chlorobaculum thiosulfatiphilum (Chlorobium limicola f.sp. thiosulfatophilum).